A 67-amino-acid chain; its full sequence is Kappa-conotoxin-like Em11.8 (67 aa).

The signal sequence occupies residues 1 to 26 (MMFRLTSVSCFLLVIACLNLFQVVLT). Cystine bridges form between Cys29/Cys43, Cys36/Cys48, Cys42/Cys51, and Cys47/Cys55. Phe59 carries the post-translational modification Phenylalanine amide. Positions 63 to 67 (ATFQE) are excised as a propeptide.

Belongs to the conotoxin I2 superfamily. Expressed by the venom duct.

Its subcellular location is the secreted. In terms of biological role, inhibits the vertebrate voltage-gated potassium channels Kv1.1/KCNA1 and Kv1.3/KCNA3. In Conus emaciatus (False virgin cone), this protein is Kappa-conotoxin-like Em11.8.